The chain runs to 650 residues: DNA gyrase subunit B (650 aa).

A Toprim domain is found at 429 to 543; the sequence is NELFIVEGDS…AGYVYIAQPP (115 aa). Residues E435, D508, and D510 each contribute to the Mg(2+) site.

It belongs to the type II topoisomerase GyrB family. In terms of assembly, heterotetramer, composed of two GyrA and two GyrB chains. In the heterotetramer, GyrA contains the active site tyrosine that forms a transient covalent intermediate with DNA, while GyrB binds cofactors and catalyzes ATP hydrolysis. Mg(2+) is required as a cofactor. Mn(2+) serves as cofactor. Requires Ca(2+) as cofactor.

It is found in the cytoplasm. The enzyme catalyses ATP-dependent breakage, passage and rejoining of double-stranded DNA.. Its function is as follows. A type II topoisomerase that negatively supercoils closed circular double-stranded (ds) DNA in an ATP-dependent manner to modulate DNA topology and maintain chromosomes in an underwound state. Negative supercoiling favors strand separation, and DNA replication, transcription, recombination and repair, all of which involve strand separation. Also able to catalyze the interconversion of other topological isomers of dsDNA rings, including catenanes and knotted rings. Type II topoisomerases break and join 2 DNA strands simultaneously in an ATP-dependent manner. This is DNA gyrase subunit B from Streptococcus pyogenes serotype M18 (strain MGAS8232).